A 95-amino-acid chain; its full sequence is uncharacterized protein (95 aa).

Over residues 1–12 (MQNFMNNLSGGS) the composition is skewed to low complexity. Positions 1-27 (MQNFMNNLSGGSNKEGGEKSNDFLSSA) are disordered.

This is an uncharacterized protein from Schizosaccharomyces pombe (strain 972 / ATCC 24843) (Fission yeast).